The sequence spans 128 residues: Ribonuclease P protein component 4 (128 aa).

The Zn(2+) site is built by Cys63, Cys66, Cys92, and Cys95.

This sequence belongs to the eukaryotic/archaeal RNase P protein component 4 family. Consists of a catalytic RNA component and at least 4 protein subunits. Forms a subcomplex with Rnp1 which stimulates the catalytic RNA. Zn(2+) serves as cofactor.

The protein localises to the cytoplasm. It carries out the reaction Endonucleolytic cleavage of RNA, removing 5'-extranucleotides from tRNA precursor.. In terms of biological role, part of ribonuclease P, a protein complex that generates mature tRNA molecules by cleaving their 5'-ends. In Methanocaldococcus jannaschii (strain ATCC 43067 / DSM 2661 / JAL-1 / JCM 10045 / NBRC 100440) (Methanococcus jannaschii), this protein is Ribonuclease P protein component 4.